A 323-amino-acid chain; its full sequence is tRNA dimethylallyltransferase (323 aa).

Residue 12–19 (GPTAAGKT) participates in ATP binding. 14 to 19 (TAAGKT) serves as a coordination point for substrate. Interaction with substrate tRNA stretches follow at residues 37–40 (DSAL) and 161–165 (QRLIR).

Belongs to the IPP transferase family. As to quaternary structure, monomer. Mg(2+) is required as a cofactor.

It carries out the reaction adenosine(37) in tRNA + dimethylallyl diphosphate = N(6)-dimethylallyladenosine(37) in tRNA + diphosphate. Catalyzes the transfer of a dimethylallyl group onto the adenine at position 37 in tRNAs that read codons beginning with uridine, leading to the formation of N6-(dimethylallyl)adenosine (i(6)A). In Pseudomonas entomophila (strain L48), this protein is tRNA dimethylallyltransferase.